Here is a 202-residue protein sequence, read N- to C-terminus: Lymphotoxin-alpha (202 aa).

Residues Met-1 to Gly-33 form the signal peptide. Residues Pro-60 to Leu-202 form the THD domain. Asn-93 carries N-linked (GlcNAc...) asparagine glycosylation.

It belongs to the tumor necrosis factor family. Homotrimer, and heterotrimer of either two LTB and one LTA subunits or (less prevalent) two LTA and one LTB subunits. Interacts with TNFRSF14.

The protein localises to the secreted. It is found in the membrane. In terms of biological role, cytokine that in its homotrimeric form binds to TNFRSF1A/TNFR1, TNFRSF1B/TNFBR and TNFRSF14/HVEM. In its heterotrimeric form with LTB binds to TNFRSF3/LTBR. Lymphotoxin is produced by lymphocytes and is cytotoxic for a wide range of tumor cells in vitro and in vivo. This chain is Lymphotoxin-alpha (Lta), found in Rattus norvegicus (Rat).